The sequence spans 1024 residues: Zn(2)-C6 fungal-type transcription factor FTF1a (1024 aa).

The segment at residues 137–164 (CIACRRKKVRCSGEKPACKHCLHSHIPC) is a DNA-binding region (zn(2)-C6 fungal-type).

The protein localises to the nucleus. Zn(2)-C6 fungal-type transcription factor that has a role in the establishment of the fungus within the plant and/or the progress of the disease. Regulates the expression of virulence factors such as SIX1 and SIX6. This chain is Zn(2)-C6 fungal-type transcription factor FTF1a, found in Fusarium oxysporum f. sp. lycopersici (strain 4287 / CBS 123668 / FGSC 9935 / NRRL 34936) (Fusarium vascular wilt of tomato).